The sequence spans 308 residues: Glutaminase (308 aa).

Substrate-binding residues include Ser66, Asn117, Glu161, Asn168, Tyr192, Tyr244, and Val262.

The protein belongs to the glutaminase family. Homotetramer.

The enzyme catalyses L-glutamine + H2O = L-glutamate + NH4(+). In Yersinia pestis bv. Antiqua (strain Nepal516), this protein is Glutaminase.